The following is a 313-amino-acid chain: Ribosomal RNA small subunit methyltransferase H (313 aa).

S-adenosyl-L-methionine is bound by residues 51–53, aspartate 71, phenylalanine 98, aspartate 119, and glutamine 126; that span reads GGH. The disordered stretch occupies residues 293–313; it reads EEQRANPRSRSARLRVAERVS.

The protein belongs to the methyltransferase superfamily. RsmH family.

It is found in the cytoplasm. The enzyme catalyses cytidine(1402) in 16S rRNA + S-adenosyl-L-methionine = N(4)-methylcytidine(1402) in 16S rRNA + S-adenosyl-L-homocysteine + H(+). Specifically methylates the N4 position of cytidine in position 1402 (C1402) of 16S rRNA. The polypeptide is Ribosomal RNA small subunit methyltransferase H (Roseiflexus sp. (strain RS-1)).